The sequence spans 68 residues: uncharacterized protein (68 aa).

The segment at methionine 1 to lysine 42 is disordered.

This is an uncharacterized protein from Saccharomyces cerevisiae (strain ATCC 204508 / S288c) (Baker's yeast).